Here is an 84-residue protein sequence, read N- to C-terminus: Cell division topological specificity factor (84 aa).

The protein belongs to the MinE family.

Functionally, prevents the cell division inhibition by proteins MinC and MinD at internal division sites while permitting inhibition at polar sites. This ensures cell division at the proper site by restricting the formation of a division septum at the midpoint of the long axis of the cell. The chain is Cell division topological specificity factor from Hydrogenovibrio crunogenus (strain DSM 25203 / XCL-2) (Thiomicrospira crunogena).